We begin with the raw amino-acid sequence, 790 residues long: Exocyst complex component SEC15A (790 aa).

Residues 49-70 are a coiled coil; that stretch reads LVHQLKNVARKKEAEIEDLCKT.

The protein belongs to the SEC15 family. In terms of assembly, the exocyst complex is composed of SEC3, SEC5, SEC6, SEC8, SEC10, EXO70A1 and EXO84B.

The protein resides in the cytoplasm. It is found in the cytosol. Functionally, component of the exocyst complex involved in the docking of exocytic vesicles with fusion sites on the plasma membrane during regulated or polarized secretion. Involved in polarized cell growth and organ morphogenesis. During cytokinesis, involved in cell plate initiation, cell plate maturation and formation of new primary cell wall. This Arabidopsis thaliana (Mouse-ear cress) protein is Exocyst complex component SEC15A (SEC15A).